A 660-amino-acid polypeptide reads, in one-letter code: Methionine--tRNA ligase (660 aa).

A 'HIGH' region motif is present at residues 11-21 (PYANGPCHLGH). Positions 143, 146, 155, and 158 each coordinate Zn(2+). The 'KMSKS' region motif lies at 325-329 (KMSTS). Thr-328 is a binding site for ATP. Positions 563 to 660 (DFDKVVIKIG…DECEVGERIQ (98 aa)) constitute a tRNA-binding domain.

The protein belongs to the class-I aminoacyl-tRNA synthetase family. MetG type 1 subfamily. In terms of assembly, homodimer. It depends on Zn(2+) as a cofactor.

Its subcellular location is the cytoplasm. It catalyses the reaction tRNA(Met) + L-methionine + ATP = L-methionyl-tRNA(Met) + AMP + diphosphate. In terms of biological role, is required not only for elongation of protein synthesis but also for the initiation of all mRNA translation through initiator tRNA(fMet) aminoacylation. The protein is Methionine--tRNA ligase of Methanobrevibacter smithii (strain ATCC 35061 / DSM 861 / OCM 144 / PS).